The following is a 34-amino-acid chain: Potassium channel toxin alpha-KTx 18.2 (34 aa).

Cystine bridges form between Cys-7/Cys-26, Cys-12/Cys-31, and Cys-16/Cys-33.

In terms of tissue distribution, expressed by the venom gland.

It localises to the secreted. In terms of biological role, reversibly blocks Shaker B potassium channels. The protein is Potassium channel toxin alpha-KTx 18.2 of Tityus discrepans (Venezuelan scorpion).